We begin with the raw amino-acid sequence, 292 residues long: GTP cyclohydrolase FolE2 (292 aa).

It belongs to the GTP cyclohydrolase IV family.

The catalysed reaction is GTP + H2O = 7,8-dihydroneopterin 3'-triphosphate + formate + H(+). The protein operates within cofactor biosynthesis; 7,8-dihydroneopterin triphosphate biosynthesis; 7,8-dihydroneopterin triphosphate from GTP: step 1/1. In terms of biological role, converts GTP to 7,8-dihydroneopterin triphosphate. In Staphylococcus haemolyticus (strain JCSC1435), this protein is GTP cyclohydrolase FolE2.